The chain runs to 689 residues: Elongation factor G (689 aa).

Residues 9 to 283 (AKFRNIGIMA…AIIEFMPSPL (275 aa)) enclose the tr-type G domain. GTP contacts are provided by residues 18–25 (AHIDAGKT), 82–86 (DTPGH), and 136–139 (NKMD).

It belongs to the TRAFAC class translation factor GTPase superfamily. Classic translation factor GTPase family. EF-G/EF-2 subfamily.

The protein resides in the cytoplasm. Catalyzes the GTP-dependent ribosomal translocation step during translation elongation. During this step, the ribosome changes from the pre-translocational (PRE) to the post-translocational (POST) state as the newly formed A-site-bound peptidyl-tRNA and P-site-bound deacylated tRNA move to the P and E sites, respectively. Catalyzes the coordinated movement of the two tRNA molecules, the mRNA and conformational changes in the ribosome. This chain is Elongation factor G, found in Clostridium botulinum (strain 657 / Type Ba4).